The following is a 360-amino-acid chain: Variable large protein 18 (360 aa).

Residues 1-26 (MRKRISAIINKLNISIMMMIVVLMIG) form the signal peptide. Cys27 is lipidated: N-palmitoyl cysteine. Cys27 carries S-diacylglycerol cysteine lipidation.

This sequence belongs to the variable large protein (Vlp) family. Alpha subfamily.

The protein resides in the cell outer membrane. Functionally, the Vlp and Vsp proteins are antigenically distinct proteins, only one vlp or vsp gene is transcriptionally active at any one time. Switching between these genes is a mechanism of host immune response evasion. This is Variable large protein 18 from Borrelia hermsii.